Consider the following 265-residue polypeptide: Small ribosomal subunit protein uS3 (265 aa).

One can recognise a KH type-2 domain in the interval 39–111; it reads IREFLNENFS…EVILNIIEVR (73 aa). Residues 224 to 250 form a disordered region; that stretch reads FEAGNQRRGQKRRPRNDQPVKDLNKEK. Positions 238–250 are enriched in basic and acidic residues; the sequence is RNDQPVKDLNKEK.

Belongs to the universal ribosomal protein uS3 family. As to quaternary structure, part of the 30S ribosomal subunit. Forms a tight complex with proteins S10 and S14.

Binds the lower part of the 30S subunit head. Binds mRNA in the 70S ribosome, positioning it for translation. In Acholeplasma laidlawii, this protein is Small ribosomal subunit protein uS3.